Reading from the N-terminus, the 129-residue chain is ATP synthase epsilon chain (129 aa).

The protein belongs to the ATPase epsilon chain family. In terms of assembly, F-type ATPases have 2 components, CF(1) - the catalytic core - and CF(0) - the membrane proton channel. CF(1) has five subunits: alpha(3), beta(3), gamma(1), delta(1), epsilon(1). CF(0) has three main subunits: a, b and c.

The protein localises to the cell inner membrane. Its function is as follows. Produces ATP from ADP in the presence of a proton gradient across the membrane. In Campylobacter curvus (strain 525.92), this protein is ATP synthase epsilon chain.